The primary structure comprises 235 residues: Phosphoribosylaminoimidazole-succinocarboxamide synthase (235 aa).

This sequence belongs to the SAICAR synthetase family.

It carries out the reaction 5-amino-1-(5-phospho-D-ribosyl)imidazole-4-carboxylate + L-aspartate + ATP = (2S)-2-[5-amino-1-(5-phospho-beta-D-ribosyl)imidazole-4-carboxamido]succinate + ADP + phosphate + 2 H(+). Its pathway is purine metabolism; IMP biosynthesis via de novo pathway; 5-amino-1-(5-phospho-D-ribosyl)imidazole-4-carboxamide from 5-amino-1-(5-phospho-D-ribosyl)imidazole-4-carboxylate: step 1/2. The protein is Phosphoribosylaminoimidazole-succinocarboxamide synthase of Sulfolobus acidocaldarius (strain ATCC 33909 / DSM 639 / JCM 8929 / NBRC 15157 / NCIMB 11770).